We begin with the raw amino-acid sequence, 106 residues long: Small ribosomal subunit protein uS10 (106 aa).

It belongs to the universal ribosomal protein uS10 family. In terms of assembly, part of the 30S ribosomal subunit.

Functionally, involved in the binding of tRNA to the ribosomes. This is Small ribosomal subunit protein uS10 from Prochlorococcus marinus (strain MIT 9211).